The chain runs to 308 residues: Ribosomal RNA large subunit methyltransferase F (308 aa).

It belongs to the methyltransferase superfamily. METTL16/RlmF family.

It localises to the cytoplasm. The enzyme catalyses adenosine(1618) in 23S rRNA + S-adenosyl-L-methionine = N(6)-methyladenosine(1618) in 23S rRNA + S-adenosyl-L-homocysteine + H(+). Functionally, specifically methylates the adenine in position 1618 of 23S rRNA. This is Ribosomal RNA large subunit methyltransferase F from Salmonella agona (strain SL483).